The primary structure comprises 260 residues: Pyridoxine 5'-phosphate synthase (260 aa).

Residue Asn15 participates in 3-amino-2-oxopropyl phosphate binding. Asp17–His18 contacts 1-deoxy-D-xylulose 5-phosphate. Position 26 (Arg26) interacts with 3-amino-2-oxopropyl phosphate. His51 acts as the Proton acceptor in catalysis. Residues Arg53 and His58 each coordinate 1-deoxy-D-xylulose 5-phosphate. Glu78 functions as the Proton acceptor in the catalytic mechanism. Thr108 contacts 1-deoxy-D-xylulose 5-phosphate. His199 (proton donor) is an active-site residue. Residues Gly200 and Gly221 to His222 contribute to the 3-amino-2-oxopropyl phosphate site.

It belongs to the PNP synthase family. Homooctamer; tetramer of dimers.

It is found in the cytoplasm. The enzyme catalyses 3-amino-2-oxopropyl phosphate + 1-deoxy-D-xylulose 5-phosphate = pyridoxine 5'-phosphate + phosphate + 2 H2O + H(+). The protein operates within cofactor biosynthesis; pyridoxine 5'-phosphate biosynthesis; pyridoxine 5'-phosphate from D-erythrose 4-phosphate: step 5/5. Its function is as follows. Catalyzes the complicated ring closure reaction between the two acyclic compounds 1-deoxy-D-xylulose-5-phosphate (DXP) and 3-amino-2-oxopropyl phosphate (1-amino-acetone-3-phosphate or AAP) to form pyridoxine 5'-phosphate (PNP) and inorganic phosphate. The polypeptide is Pyridoxine 5'-phosphate synthase (Cupriavidus metallidurans (strain ATCC 43123 / DSM 2839 / NBRC 102507 / CH34) (Ralstonia metallidurans)).